Consider the following 179-residue polypeptide: Translation initiation factor IF-3 (179 aa).

The protein belongs to the IF-3 family. In terms of assembly, monomer.

It is found in the cytoplasm. Functionally, IF-3 binds to the 30S ribosomal subunit and shifts the equilibrium between 70S ribosomes and their 50S and 30S subunits in favor of the free subunits, thus enhancing the availability of 30S subunits on which protein synthesis initiation begins. This Buchnera aphidicola subsp. Acyrthosiphon pisum (strain 5A) protein is Translation initiation factor IF-3.